A 195-amino-acid chain; its full sequence is Recombination protein RecR (195 aa).

The C4-type zinc-finger motif lies at 56-71; sequence CRQCHSFSDDDICPIC. Positions 79 to 174 constitute a Toprim domain; it reads SVLCVVETAA…KVTRIAQGIP (96 aa).

It belongs to the RecR family.

May play a role in DNA repair. It seems to be involved in an RecBC-independent recombinational process of DNA repair. It may act with RecF and RecO. The polypeptide is Recombination protein RecR (Psychrobacter sp. (strain PRwf-1)).